Consider the following 105-residue polypeptide: Heat shock protein HspQ (105 aa).

Positions 77–105 are disordered; the sequence is MRDEHPEQPSMDELARTIRKQLQAPRLRN.

The protein belongs to the HspQ family.

Its subcellular location is the cytoplasm. Functionally, involved in the degradation of certain denaturated proteins, including DnaA, during heat shock stress. This Salmonella arizonae (strain ATCC BAA-731 / CDC346-86 / RSK2980) protein is Heat shock protein HspQ.